A 351-amino-acid polypeptide reads, in one-letter code: MTDTWWLNPCKAIDAQAYEQALARQQQLTKPAGSLGQLEALAVQLAGLQGQVKPSVDSLWIAIFAGDHGVVAEGVSAFPQEVTGQMLQNFVTGGAAISVLARQLGAQLEVVDLGTVTPSLDLPGVRHLNIGAGTANFVNGPAMTEAQGQLALQAGRDSAWRALANGAQLFIGGEMGIGNTTAASALACALLDCPVSDLTGPGTGLNAQGVSHKVAVIERALALHAGQRGNALQTLFNLGGFEIAALVGAYLGCAQEGIVVLVDGFICTVAALVATRVNPACREWLVFGHRGAEPGHRHVLQRLDAQPLLELGLRLGEGSGAALAVPLLRLACALHGQMATFAEAAVADRPA.

The active-site Proton acceptor is the E317.

The protein belongs to the CobT family.

The enzyme catalyses 5,6-dimethylbenzimidazole + nicotinate beta-D-ribonucleotide = alpha-ribazole 5'-phosphate + nicotinate + H(+). It functions in the pathway nucleoside biosynthesis; alpha-ribazole biosynthesis; alpha-ribazole from 5,6-dimethylbenzimidazole: step 1/2. Its function is as follows. Catalyzes the synthesis of alpha-ribazole-5'-phosphate from nicotinate mononucleotide (NAMN) and 5,6-dimethylbenzimidazole (DMB). The protein is Nicotinate-nucleotide--dimethylbenzimidazole phosphoribosyltransferase of Pseudomonas fluorescens (strain SBW25).